We begin with the raw amino-acid sequence, 101 residues long: Small ribosomal subunit protein uS14 (101 aa).

This sequence belongs to the universal ribosomal protein uS14 family. As to quaternary structure, part of the 30S ribosomal subunit. Contacts proteins S3 and S10.

In terms of biological role, binds 16S rRNA, required for the assembly of 30S particles and may also be responsible for determining the conformation of the 16S rRNA at the A site. In Rhizobium etli (strain CIAT 652), this protein is Small ribosomal subunit protein uS14.